Here is a 464-residue protein sequence, read N- to C-terminus: Protein FAM90A11 (464 aa).

Disordered regions lie at residues 1–42 (MMAR…DPRL), 70–389 (PATL…HDGA), and 415–437 (HSPE…SEAP). Basic and acidic residues-rich tracts occupy residues 74-89 (GKKE…KPRV) and 97-114 (NKDK…DPQR). A compositionally biased stretch (low complexity) spans 180–197 (LASLSPLRKASLSSSSSL). Over residues 341-356 (GPSTSPQMGRRTSAQV) the composition is skewed to polar residues.

This sequence belongs to the FAM90 family.

This Homo sapiens (Human) protein is Protein FAM90A11.